A 580-amino-acid polypeptide reads, in one-letter code: E3 ubiquitin-protein ligase TRIM45 (580 aa).

The RING-type zinc finger occupies 29-98 (CPTCLRLFKV…QIGILCPVCD (70 aa)). 2 B box-type zinc fingers span residues 130 to 176 (GQGL…MVDL) and 186 to 227 (GKPI…YDFT). Residues cysteine 135, cysteine 138, cysteine 158, histidine 162, cysteine 191, histidine 194, cysteine 214, and histidine 219 each contribute to the Zn(2+) site. Residues 249 to 329 (VEALEDALAQ…LLADMRTGVE (81 aa)) adopt a coiled-coil conformation. Residues 394-497 (TQEVDPAQCV…VQGSPFNVTV (104 aa)) form a Filamin repeat.

This sequence belongs to the TRIM/RBCC family.

The protein resides in the cytoplasm. The protein localises to the nucleus. The enzyme catalyses S-ubiquitinyl-[E2 ubiquitin-conjugating enzyme]-L-cysteine + [acceptor protein]-L-lysine = [E2 ubiquitin-conjugating enzyme]-L-cysteine + N(6)-ubiquitinyl-[acceptor protein]-L-lysine.. E3 ubiquitin-protein ligase that plays a role in the regulation of inflammatory response. Mechanistically, mediates the 'Lys-48'-linked polyubiquitination of TAB2, a regulatory protein of the kinase TAK1, leading to its degradation via the proteasomal pathway and inhibition of the TLR-mediated inflammatory immune response. May act as a transcriptional repressor in mitogen-activated protein kinase signaling pathway. The sequence is that of E3 ubiquitin-protein ligase TRIM45 (Trim45) from Mus musculus (Mouse).